A 267-amino-acid polypeptide reads, in one-letter code: Neuferricin (267 aa).

Residues methionine 1–threonine 17 form the signal peptide. The region spanning leucine 53–isoleucine 150 is the Cytochrome b5 heme-binding domain.

This sequence belongs to the cytochrome b5 family. MAPR subfamily.

The protein resides in the secreted. In terms of biological role, heme-binding protein which promotes neuronal but not astrocyte differentiation. This Danio rerio (Zebrafish) protein is Neuferricin (cyb5d2).